Here is a 129-residue protein sequence, read N- to C-terminus: uncharacterized protein (129 aa).

A helical transmembrane segment spans residues 103-125 (AISSAFQYGLSTSNFFFIFLYIF).

Its subcellular location is the membrane. This is an uncharacterized protein from Acanthamoeba polyphaga (Amoeba).